The sequence spans 188 residues: Elongation factor P (188 aa).

It belongs to the elongation factor P family.

Its subcellular location is the cytoplasm. Its pathway is protein biosynthesis; polypeptide chain elongation. Functionally, involved in peptide bond synthesis. Stimulates efficient translation and peptide-bond synthesis on native or reconstituted 70S ribosomes in vitro. Probably functions indirectly by altering the affinity of the ribosome for aminoacyl-tRNA, thus increasing their reactivity as acceptors for peptidyl transferase. The protein is Elongation factor P of Ralstonia nicotianae (strain ATCC BAA-1114 / GMI1000) (Ralstonia solanacearum).